A 798-amino-acid polypeptide reads, in one-letter code: PR domain zinc finger protein 4 (798 aa).

Residues 408–525 (KQLVLRQSIV…PENELLFYYS (118 aa)) form the SET domain. 5 consecutive C2H2-type zinc fingers follow at residues 586–608 (WKCS…FMGH), 614–636 (HKCD…LKIH), 642–664 (YRCT…MVIH), 670–692 (LKCD…VLIH), and 698–720 (IKCP…LNSH). The segment at 726–747 (YVCEKCTKAYLTKYHLTRHLKA) adopts a C2H2-type 6; degenerate zinc-finger fold. Positions 750 to 798 (EPASSSSAQDDEDEDGDSGEDGLPGSMTTEGCRMSSAVYSADESLSAHK) are disordered. Residues 758–769 (QDDEDEDGDSGE) show a composition bias toward acidic residues.

Belongs to the class V-like SAM-binding methyltransferase superfamily.

It localises to the nucleus. In terms of biological role, may function as a transcription factor involved in cell differentiation. In Rattus norvegicus (Rat), this protein is PR domain zinc finger protein 4 (Prdm4).